Consider the following 522-residue polypeptide: Protein nucleotidyltransferase YdiU (522 aa).

Residues Gly109, Gly111, Arg112, Lys132, Asp144, Gly145, Arg195, and Arg202 each coordinate ATP. Residue Asp271 is the Proton acceptor of the active site. Mg(2+) contacts are provided by Asn272 and Asp281. ATP is bound at residue Asp281.

It belongs to the SELO family. The cofactor is Mg(2+). Mn(2+) is required as a cofactor.

It catalyses the reaction L-seryl-[protein] + ATP = 3-O-(5'-adenylyl)-L-seryl-[protein] + diphosphate. The enzyme catalyses L-threonyl-[protein] + ATP = 3-O-(5'-adenylyl)-L-threonyl-[protein] + diphosphate. The catalysed reaction is L-tyrosyl-[protein] + ATP = O-(5'-adenylyl)-L-tyrosyl-[protein] + diphosphate. It carries out the reaction L-histidyl-[protein] + UTP = N(tele)-(5'-uridylyl)-L-histidyl-[protein] + diphosphate. It catalyses the reaction L-seryl-[protein] + UTP = O-(5'-uridylyl)-L-seryl-[protein] + diphosphate. The enzyme catalyses L-tyrosyl-[protein] + UTP = O-(5'-uridylyl)-L-tyrosyl-[protein] + diphosphate. Its function is as follows. Nucleotidyltransferase involved in the post-translational modification of proteins. It can catalyze the addition of adenosine monophosphate (AMP) or uridine monophosphate (UMP) to a protein, resulting in modifications known as AMPylation and UMPylation. The sequence is that of Protein nucleotidyltransferase YdiU from Burkholderia ambifaria (strain MC40-6).